We begin with the raw amino-acid sequence, 700 residues long: Choline transporter-like protein 5-B (700 aa).

The Cytoplasmic segment spans residues 1–4; it reads GCTD. A helical membrane pass occupies residues 5 to 25; it reads VLCCVIFVIVILGYIVLGTVA. The Extracellular portion of the chain corresponds to 26–209; that stretch reads WMHGDPRKVV…KIFEDYASSW (184 aa). N157 and N164 each carry an N-linked (GlcNAc...) asparagine glycan. A helical transmembrane segment spans residues 210–230; that stretch reads FWILIGLVISMLVSLVFILLL. The Cytoplasmic segment spans residues 231–233; that stretch reads RFT. Residues 234-254 traverse the membrane as a helical segment; sequence AGVLFWLVIFGVIAAVGYGIW. The Extracellular portion of the chain corresponds to 255 to 292; the sequence is HCYWEYSSLKGKPDSDVTISDIGFQTDFRVYLQLSQTW. A helical membrane pass occupies residues 293 to 313; that stretch reads LIFMTSLAVIEAIIILVLIFL. Residues 314–341 are Cytoplasmic-facing; sequence RNRVRIAIALLKEGSKAIGCIMSTLFYP. The helical transmembrane segment at 342–362 threads the bilayer; the sequence is IITFLLLALCIAYWAVTAVFL. The Extracellular segment spans residues 363–432; that stretch reads ASSGEAVYKV…LQLCNLLVFL (70 aa). Residues N383 and N395 are each glycosylated (N-linked (GlcNAc...) asparagine). Residues 433–455 traverse the membrane as a helical segment; the sequence is WLVNFTIALGQCTLAGAFAAYYW. Topologically, residues 456–482 are cytoplasmic; sequence ALRKPADIPPCPLASSFGRALRYHTGS. The helical transmembrane segment at 483-503 threads the bilayer; the sequence is LAFGALILSIVQFIRIILEYL. Topologically, residues 504–541 are extracellular; sequence DHKLKGAHNAFTRFLLCCLKCCFWCLEHFIKFMNRNAY. A helical transmembrane segment spans residues 542-562; sequence IMISIYGKNFCTSARDAFFLL. At 563 to 577 the chain is on the cytoplasmic side; the sequence is MRNVMRVAVLDKVTD. The helical transmembrane segment at 578 to 598 threads the bilayer; sequence FLLFLGKLLISGSVGVLAFFF. Residues 599 to 616 are Extracellular-facing; it reads FTRQIPVIQEEVPSLNYY. A helical membrane pass occupies residues 617–637; the sequence is WVPLLTVIFGSYMIAHGFFNV. Residues 638–687 are Cytoplasmic-facing; the sequence is YAMCVDTLFLCFLLDLEKNDGSATRPYYMCSSLRAILNKKNQKRPKETKR. A disordered region spans residues 676–700; it reads KKNQKRPKETKRGRKQKKEQPKSRH. Over residues 677-692 the composition is skewed to basic residues; the sequence is KNQKRPKETKRGRKQK.

Belongs to the CTL (choline transporter-like) family.

The protein resides in the cell membrane. The catalysed reaction is choline(out) + n H(+)(in) = choline(in) + n H(+)(out). Functionally, choline/H+ antiporter. The sequence is that of Choline transporter-like protein 5-B (slc44a5b) from Danio rerio (Zebrafish).